Here is a 230-residue protein sequence, read N- to C-terminus: Cytidylate kinase (230 aa).

14-22 is an ATP binding site; it reads GPSGVGKSS.

This sequence belongs to the cytidylate kinase family. Type 1 subfamily.

The protein localises to the cytoplasm. It carries out the reaction CMP + ATP = CDP + ADP. The catalysed reaction is dCMP + ATP = dCDP + ADP. This is Cytidylate kinase from Buchnera aphidicola subsp. Baizongia pistaciae (strain Bp).